We begin with the raw amino-acid sequence, 672 residues long: MAKSDGDDPLRPASPRLRSSRRHSLRYSAYTGGPDPLAPPVDLRDALEQIGQDVMAGASPRRALSELLRRGTRNLTGADRLAAEVNRRRRELLRRNNLDGTLQEIKKLLDEAVLAERKELARALDDDARFAELQLDALPVSPAKAVQELAEYRWRSGQAREKYEQIKDLLGRELLDQRFAGMKQALAGATDDDRRRVTEMLDDLNDLLDKHARGEDTQRDFDEFMTKHGEFFPENPRNVEELLDSLAKRAAAAQRFRNSLSQEQRDELDALAQQAFGSPALMRALDRLDAHLQAARPGEDWTGSQQFSGDNPFGMGEGTQALADIAELEQLAEQLSQSYPGASMDDVDLDALARQLGDQAAVDARTLAELERALVNQGFLDRGSDGQWRLSPKAMRRLGETALRDVAQQLSGRHGERDHRRAGAAGELTGATRPWQFGDTEPWHVARTLTNAVLRQAAAVHDRIRITVEDVEVAETETRTQAAVALLVDTSFSMVMENRWLPMKRTALALHHLVCTRFRSDALQIIAFGRYARTVTAAELTGLAGVYEQGTNLHHALALAGRHLRRHAGAQPVVLVVTDGEPTAHLEDFDGDGTSVFFDYPPHPRTIAHTVRGFDDMARLGAQVTIFRLGSDPGLARFIDQVARRVQGRVVVPDLDGLGAAVVGDYLRFRRR.

Over residues 1–10 (MAKSDGDDPL) the composition is skewed to basic and acidic residues. The interval 1–40 (MAKSDGDDPLRPASPRLRSSRRHSLRYSAYTGGPDPLAPP) is disordered.

This is an uncharacterized protein from Mycobacterium tuberculosis (strain CDC 1551 / Oshkosh).